We begin with the raw amino-acid sequence, 681 residues long: PTS system glucose-specific EIICBA component (681 aa).

In terms of domain architecture, PTS EIIC type-1 spans 3 to 414; sequence KKLFGQLQRI…LKYKTPGRED (412 aa). Transmembrane regions (helical) follow at residues 16–36, 73–93, 126–146, 170–190, 199–219, 273–293, 303–323, 328–348, 355–375, and 383–403; these read LMLP…GTAM, MIFA…AAIA, ILGI…GALA, FVPI…ALIW, AFST…FGFI, FMQG…LAIY, VVAG…ITEP, FLFV…LSFL, LHLG…GILP, and VIPV…FLIV. A PTS EIIB type-1 domain is found at 425-506; it reads TELPYAVLEA…QQIMNGQVVE (82 aa). The active-site Phosphocysteine intermediate; for EIIB activity is the Cys-447. The PTS EIIA type-1 domain occupies 551–655; it reads DQVFSEKMMG…SDITPIIVTQ (105 aa). His-603 (tele-phosphohistidine intermediate; for EIIA activity) is an active-site residue.

It is found in the cell membrane. It catalyses the reaction N(pros)-phospho-L-histidyl-[protein] + D-glucose(out) = D-glucose 6-phosphate(in) + L-histidyl-[protein]. The phosphoenolpyruvate-dependent sugar phosphotransferase system (sugar PTS), a major carbohydrate active transport system, catalyzes the phosphorylation of incoming sugar substrates concomitantly with their translocation across the cell membrane. This system is involved in glucose transport. The protein is PTS system glucose-specific EIICBA component (ptsG) of Staphylococcus aureus (strain MRSA252).